The following is a 492-amino-acid chain: Aerolysin (492 aa).

The first 21 residues, 1–21 (MKALKITGLSLIISATLAAQT), serve as a signal peptide directing secretion. 2 disulfides stabilise this stretch: cysteine 42-cysteine 98 and cysteine 182-cysteine 187. The interval 68 to 84 (WQISGLANNWVILGPGY) is interaction with host N-linked glycan. The tract at residues 256–288 (YGLSEKVSTKNKFKWPLVGETEVSIEIAANQSW) is part of the transmembrane beta-barrel after proteolytic activation of the toxin and insertion into the host membrane. Residues 346 to 355 (RWGGNAWHTH) are interaction with glycans from host GPI-anchor. The propeptide occupies 446-492 (GSDSKVRRTRSVDGANTGLKLDIPLDAQELAELGFENVTLSVTPARN).

The protein belongs to the aerolysin family. In terms of assembly, homodimer in solution; homoheptamer in the host membrane. After binding to GPI-anchored proteins in target membranes and proteolytic removal of the C-terminal propeptide, the protein assembles into a heptameric pre-pore complex. A further conformation change leads to insertion into the host membrane. Post-translationally, proteolytic cleavage and subsequent release of the propeptide trigger a major conformation change, leading to the formation of a heptameric pre-pore that then inserts into the host membrane.

It is found in the secreted. It localises to the host cell membrane. Secreted, cytolytic toxin that forms pores in host membranes after proteolytic removal of a C-terminal propeptide, leading to destruction of the membrane permeability barrier and cell death. The pores are formed by transmembrane beta-strands and are approximately 3 nm in diameter. This Aeromonas enteropelogenes (Aeromonas trota) protein is Aerolysin (aerA).